The primary structure comprises 143 residues: Large ribosomal subunit protein uL11 (143 aa).

Belongs to the universal ribosomal protein uL11 family. In terms of assembly, part of the ribosomal stalk of the 50S ribosomal subunit. Interacts with L10 and the large rRNA to form the base of the stalk. L10 forms an elongated spine to which L12 dimers bind in a sequential fashion forming a multimeric L10(L12)X complex. In terms of processing, one or more lysine residues are methylated.

In terms of biological role, forms part of the ribosomal stalk which helps the ribosome interact with GTP-bound translation factors. The protein is Large ribosomal subunit protein uL11 of Ectopseudomonas mendocina (strain ymp) (Pseudomonas mendocina).